The chain runs to 202 residues: T-cell surface glycoprotein CD3 epsilon chain (202 aa).

The first 21 residues, 1 to 21 (MPSGSLWRVLGLCLLSVGAWG), serve as a signal peptide directing secretion. The Extracellular portion of the chain corresponds to 22–125 (QEDNEDPLEP…NCVEVDTMTA (104 aa)). The Ig-like domain occupies 33–107 (PQTSASARYK…TSNSLEKNYL (75 aa)). Cys54 and Cys96 are oxidised to a cystine. Residues 126-146 (VAIVVADVCITLGFLLLVYYW) form a helical membrane-spanning segment. Topologically, residues 147-202 (SKNKKASSVTMMRGPGAGGRPRGQNKEKPPPVPNPDYEPIRKGQQDLYSGLNQRGI) are cytoplasmic. Residues 156-202 (TMMRGPGAGGRPRGQNKEKPPPVPNPDYEPIRKGQQDLYSGLNQRGI) form a disordered region. The segment at 170-187 (QNKEKPPPVPNPDYEPIR) is NUMB-binding region. In terms of domain architecture, ITAM spans 173–200 (EKPPPVPNPDYEPIRKGQQDLYSGLNQR). The proline-rich sequence stretch occupies residues 174–181 (KPPPVPNP). Phosphotyrosine occurs at positions 183 and 194. Positions 192–202 (DLYSGLNQRGI) are enriched in polar residues.

The TCR-CD3 complex is composed of a CD3D/CD3E and a CD3G/CD3E heterodimers that preferentially associate with TCRalpha and TCRbeta, respectively, to form TCRalpha/CD3E/CD3G and TCRbeta/CD3G/CD3E trimers. In turn, the hexamer interacts with CD3Z homodimer to form the TCR-CD3 complex. Alternatively, TCRalpha and TCRbeta can be replaced by TCRgamma and TCRdelta. Interacts with CD6. Interacts (via Proline-rich sequence) with NCK1; the interaction is ligand dependent but independent of tyrosine kinase activation. Phosphorylated on Tyr residues after T-cell receptor triggering by LCK in association with CD4/CD8.

It is found in the cell membrane. In terms of biological role, part of the TCR-CD3 complex present on T-lymphocyte cell surface that plays an essential role in adaptive immune response. When antigen presenting cells (APCs) activate T-cell receptor (TCR), TCR-mediated signals are transmitted across the cell membrane by the CD3 chains CD3D, CD3E, CD3G and CD3Z. All CD3 chains contain immunoreceptor tyrosine-based activation motifs (ITAMs) in their cytoplasmic domain. Upon TCR engagement, these motifs become phosphorylated by Src family protein tyrosine kinases LCK and FYN, resulting in the activation of downstream signaling pathways. In addition of this role of signal transduction in T-cell activation, CD3E plays an essential role in correct T-cell development. Also participates in internalization and cell surface down-regulation of TCR-CD3 complexes via endocytosis sequences present in CD3E cytosolic region. In addition to its role as a TCR coreceptor, it serves as a receptor for ITPRIPL1. Ligand recognition inhibits T-cell activation by promoting interaction with NCK1, which prevents CD3E-ZAP70 interaction and blocks the ERK-NFkB signaling cascade and calcium influx. In Felis catus (Cat), this protein is T-cell surface glycoprotein CD3 epsilon chain (CD3E).